We begin with the raw amino-acid sequence, 213 residues long: MHQQKRQPELVEGNLPVFVFPTELIFYADDQSTHKQVLTLYNPYEFALKFKVLCTTPNKYVVVDAAGAVKPQCCVDIVIRHRDVRSCHYGVIDKFRLQVSEQSQRKALGRKEVIATLLPSAKEQQKEEEEKRIKEHLTESVFFEQSCQPENRAVSSGPSLLTVFLGVVCIAALMLPTLGDMESLVPLYLHLSVNQKLVAAYILGLITMAILRT.

The MSP domain occupies 16-143; it reads PVFVFPTELI…KEHLTESVFF (128 aa). Transmembrane regions (helical) follow at residues 159-179 and 191-211; these read SLLT…PTLG and LSVN…MAIL. The short motif at 205–208 is the Nuclear export signal element; that stretch reads LITM.

Widely expressed. Shows highest expression in ribs, and slightly lower levels of expression in heart, kidney, muscle, thymus, calvariae and lung. Also detected at low levels in spleen and liver.

The protein localises to the endoplasmic reticulum membrane. It is found in the golgi apparatus membrane. Functionally, plays a role in differentiation and/or proliferation of mesenchymal stem cells. Proposed to be involved in epithelial-to-mesenchymal transition (EMT). However, another study suggests that it is not required for EMT or stem cell self-renewal and acts during later stages of differentiation. This is Motile sperm domain-containing protein 1 (Mospd1) from Mus musculus (Mouse).